Here is a 230-residue protein sequence, read N- to C-terminus: 3-isopropylmalate dehydratase small subunit (230 aa).

It belongs to the LeuD family. LeuD type 1 subfamily. As to quaternary structure, heterodimer of LeuC and LeuD.

It carries out the reaction (2R,3S)-3-isopropylmalate = (2S)-2-isopropylmalate. It participates in amino-acid biosynthesis; L-leucine biosynthesis; L-leucine from 3-methyl-2-oxobutanoate: step 2/4. In terms of biological role, catalyzes the isomerization between 2-isopropylmalate and 3-isopropylmalate, via the formation of 2-isopropylmaleate. The sequence is that of 3-isopropylmalate dehydratase small subunit from Bifidobacterium longum (strain DJO10A).